The primary structure comprises 386 residues: tRNA N6-adenosine threonylcarbamoyltransferase (386 aa).

Residues histidine 112 and histidine 116 each coordinate Fe cation. Substrate contacts are provided by residues 134 to 138 (LASGG), aspartate 167, glycine 180, and asparagine 322. Residue aspartate 350 coordinates Fe cation.

This sequence belongs to the KAE1 / TsaD family. Fe(2+) is required as a cofactor.

It is found in the cytoplasm. The catalysed reaction is L-threonylcarbamoyladenylate + adenosine(37) in tRNA = N(6)-L-threonylcarbamoyladenosine(37) in tRNA + AMP + H(+). In terms of biological role, required for the formation of a threonylcarbamoyl group on adenosine at position 37 (t(6)A37) in tRNAs that read codons beginning with adenine. Is involved in the transfer of the threonylcarbamoyl moiety of threonylcarbamoyl-AMP (TC-AMP) to the N6 group of A37, together with TsaE and TsaB. TsaD likely plays a direct catalytic role in this reaction. The chain is tRNA N6-adenosine threonylcarbamoyltransferase from Rickettsia akari (strain Hartford).